The chain runs to 602 residues: uncharacterized protein (602 aa).

In terms of domain architecture, MCM spans 271-472; that stretch reads IIDILADILI…RDEEVAKYIF (202 aa). Residue 315–322 coordinates ATP; it reads TEVGIDKT.

It belongs to the MCM family.

This is an uncharacterized protein from Methanocaldococcus jannaschii (strain ATCC 43067 / DSM 2661 / JAL-1 / JCM 10045 / NBRC 100440) (Methanococcus jannaschii).